The primary structure comprises 458 residues: COBRA-like protein 2 (458 aa).

The N-terminal stretch at 1 to 29 is a signal peptide; the sequence is MARFLLGAAAIALLAGVSSLLLMVPFAEA. 8 N-linked (GlcNAc...) asparagine glycosylation sites follow: Asn38, Asn163, Asn171, Asn211, Asn236, Asn318, Asn333, and Asn352. The chain crosses the membrane as a helical span at residues 430–450; sequence VFLLMSFLVCGTLAFLHNHLV.

It belongs to the COBRA family.

Its subcellular location is the membrane. This chain is COBRA-like protein 2 (BC1L2), found in Oryza sativa subsp. japonica (Rice).